The following is a 183-amino-acid chain: Protein jagunal homolog 1-B (183 aa).

The Cytoplasmic portion of the chain corresponds to 1 to 39 (MASRAGPRATGTDGSDYQHRERVASHYQMSVALKSEIKK). A helical transmembrane segment spans residues 40-60 (LNIAHAVVWFLVAAQVLVSQL). Over 61 to 71 (NLVSHKVVASP) the chain is Lumenal. The chain crosses the membrane as a helical span at residues 72–92 (YQWEYTYLLSIIPTVFSFMAL). Residues 93–99 (PKNNISY) are Cytoplasmic-facing. The chain crosses the membrane as a helical span at residues 100-120 (LVISMISGGLFCIGPILYGGM). Residues 121-137 (EMFPVAQQLYRHGKAYR) are Lumenal-facing. Residues 138–158 (FIFGFSAVSIMYLVLIISVQV) traverse the membrane as a helical segment. The Cytoplasmic segment spans residues 159 to 183 (HGWQIYYSKKLLDAWFTNTQDKKKK).

The protein belongs to the jagunal family.

Its subcellular location is the endoplasmic reticulum membrane. In terms of biological role, endoplasmic reticulum transmembrane protein involved in vesicle-mediated transport, which is required for neutrophil function. This Danio rerio (Zebrafish) protein is Protein jagunal homolog 1-B (jagn1b).